Here is a 179-residue protein sequence, read N- to C-terminus: MARLREFYKETVVPELVKQFGYKSVMEVPRIEKITLNMGVGEAVADKKVMEHAVSDLEKIAGQKPVVTVARKSIAGFKIRDNYPVGCKVTLRRDQMFEFLDRLITIALPRVRDFRGVSGKSFDGRGNYNMGVREQIIFPEIEYDKIDALRGLNITITTTAKTDEEAKALLSLFKFPFKG.

Belongs to the universal ribosomal protein uL5 family. As to quaternary structure, part of the 50S ribosomal subunit; part of the 5S rRNA/L5/L18/L25 subcomplex. Contacts the 5S rRNA and the P site tRNA. Forms a bridge to the 30S subunit in the 70S ribosome.

This is one of the proteins that bind and probably mediate the attachment of the 5S RNA into the large ribosomal subunit, where it forms part of the central protuberance. In the 70S ribosome it contacts protein S13 of the 30S subunit (bridge B1b), connecting the 2 subunits; this bridge is implicated in subunit movement. Contacts the P site tRNA; the 5S rRNA and some of its associated proteins might help stabilize positioning of ribosome-bound tRNAs. This is Large ribosomal subunit protein uL5 from Neisseria meningitidis serogroup C (strain 053442).